The chain runs to 162 residues: Ribosome maturation factor RimM (162 aa).

Positions 86 to 160 (EGRYYYFALI…GIHVDPIPGL (75 aa)) constitute a PRC barrel domain.

The protein belongs to the RimM family. As to quaternary structure, binds ribosomal protein uS19.

It localises to the cytoplasm. An accessory protein needed during the final step in the assembly of 30S ribosomal subunit, possibly for assembly of the head region. Essential for efficient processing of 16S rRNA. May be needed both before and after RbfA during the maturation of 16S rRNA. It has affinity for free ribosomal 30S subunits but not for 70S ribosomes. The protein is Ribosome maturation factor RimM of Thermus thermophilus (strain ATCC BAA-163 / DSM 7039 / HB27).